Here is a 209-residue protein sequence, read N- to C-terminus: tRNA (guanine-N(7)-)-methyltransferase (209 aa).

Residues D35, E60, N87, and D113 each contribute to the S-adenosyl-L-methionine site. The active site involves D113. K117 and D149 together coordinate substrate.

This sequence belongs to the class I-like SAM-binding methyltransferase superfamily. TrmB family.

It carries out the reaction guanosine(46) in tRNA + S-adenosyl-L-methionine = N(7)-methylguanosine(46) in tRNA + S-adenosyl-L-homocysteine. Its pathway is tRNA modification; N(7)-methylguanine-tRNA biosynthesis. Functionally, catalyzes the formation of N(7)-methylguanine at position 46 (m7G46) in tRNA. In Prochlorococcus marinus (strain AS9601), this protein is tRNA (guanine-N(7)-)-methyltransferase.